The primary structure comprises 115 residues: NAD(P)H-quinone oxidoreductase subunit M (115 aa).

It belongs to the complex I NdhM subunit family. As to quaternary structure, NDH-1 can be composed of about 15 different subunits; different subcomplexes with different compositions have been identified which probably have different functions.

It is found in the cellular thylakoid membrane. It carries out the reaction a plastoquinone + NADH + (n+1) H(+)(in) = a plastoquinol + NAD(+) + n H(+)(out). The enzyme catalyses a plastoquinone + NADPH + (n+1) H(+)(in) = a plastoquinol + NADP(+) + n H(+)(out). NDH-1 shuttles electrons from an unknown electron donor, via FMN and iron-sulfur (Fe-S) centers, to quinones in the respiratory and/or the photosynthetic chain. The immediate electron acceptor for the enzyme in this species is believed to be plastoquinone. Couples the redox reaction to proton translocation, and thus conserves the redox energy in a proton gradient. Cyanobacterial NDH-1 also plays a role in inorganic carbon-concentration. The sequence is that of NAD(P)H-quinone oxidoreductase subunit M from Synechococcus sp. (strain CC9902).